Consider the following 251-residue polypeptide: Keratin-associated protein 10-10 (251 aa).

Tandem repeats lie at residues 26-30 (CCEPC), 31-35 (CCAPA), 52-56 (CCQTA), 84-88 (CCTSS), 94-98 (CCVPV), 99-103 (CCVPV), 104-109 (CCVPVC), 126-130 (CCQQS), 136-140 (CCTSS), 146-150 (CCVPV), 168-172 (CCQQS), 178-182 (CCTAS), 183-187 (CCRPS), 202-206 (CCVPV), and 220-224 (CCRTA). Residues 26 to 224 (CCEPCCCAPA…SCQPSCCRTA (199 aa)) are 15 X 5 AA repeats of C-C-X(3).

Belongs to the KRTAP type 10 family. Interacts with hair keratins. Restricted to a narrow region of the hair fiber cuticle, lying approximately 20 cell layers above the apex of the dermal papilla of the hair root; not detected in any other tissues.

Functionally, in the hair cortex, hair keratin intermediate filaments are embedded in an interfilamentous matrix, consisting of hair keratin-associated proteins (KRTAP), which are essential for the formation of a rigid and resistant hair shaft through their extensive disulfide bond cross-linking with abundant cysteine residues of hair keratins. The matrix proteins include the high-sulfur and high-glycine-tyrosine keratins. In Homo sapiens (Human), this protein is Keratin-associated protein 10-10 (KRTAP10-10).